Reading from the N-terminus, the 435-residue chain is FAD-dependent monooxygenase ATEG_07662 (435 aa).

Residues 8–28 (PLDVAIIGGGIIGIMTALGLL) form a helical membrane-spanning segment. Residues glutamate 38, alanine 51, and arginine 119 each coordinate FAD. N-linked (GlcNAc...) asparagine glycosylation is present at asparagine 191. Residue arginine 201 is part of the active site. Residues aspartate 317 and alanine 330 each contribute to the FAD site.

Belongs to the paxM FAD-dependent monooxygenase family. Requires FAD as cofactor.

The protein localises to the membrane. The protein operates within secondary metabolite biosynthesis. FAD-dependent monooxygenase; part of the cluster B that mediates the biosynthesis of azasperpyranones, members of the azaphilone family that exhibit anti-cancer activities. Azasperpyranones are synthesized by 2 clusters, A and B. Cluster A is responsible for the production of the polyhydric phenol moiety while the azaphilonoid scaffold is produced by the cluster B. The non-reducing polyketide synthase ATEG_03629 produces 5-methyl orsellinic acid, which is then reduced to 5-methyl orsellinic aldehyde by the NRPS-like protein ATEG_03630. 5-methyl orsellinic aldehyde is then first hydroxylated by the FAD-dependent monooxygenase ATEG_03635 and subsequently hydroxylated by the cytochrome P450 monooxygenase ATEG_03631 to produce the unstable polyhydric phenol precursor of azasperpyranones. On the other hand, the polyketide synthase ATEG_07659 is responsible for producing the 3,5-dimethyloctadienone moiety from acetyl-CoA, three malonyl-CoA, and two S-adenosyl methionines (SAM). The 3,5-dimethyloctadienone moiety is then loaded onto the SAT domain of ATEG_07661 and extended with four malonyl-CoA and one SAM, which leads to the formation of 2,4-dihydroxy-6-(5,7-dimethyl-2-oxo-trans-3-trans-5-nonadienyl)-3-methylbenzaldehyde (compound 8) after reductive release and aldol condensation. The FAD-dependent monooxygenase ATEG_07662 is the next enzyme in the biosynthesis sequence and hydroxylates the side chain at the benzylic position of compound 8. In Aspergillus nidulans, afoF, the ortholog of the FAD-dependent oxygenase ATEG_07660, is the key enzyme for the biosynthesis of asperfuranone by catalyzing the hydroxylation at C-8 of to prevent the formation of a six-membered ring hemiacetal intermediate and thus facilitating the formation of a five-membered ring to produce asperfuranone. In Aspergillus terreus, ATEG_07660 is probably not functional, which leads to the formation of the six-membered ring hemiacetal intermediate presperpyranone instead of asperfuranone. Finally, ATEG_03636 is involved in the condensation of the polyhydric phenol moiety produced by cluster A and the perasperpyranone precursor produced by cluster B, to yield azasperpyranone A. Further modifications of azasperpyranone A result in the production of derivatives, including azasperpyranone B to F. This is FAD-dependent monooxygenase ATEG_07662 from Aspergillus terreus (strain NIH 2624 / FGSC A1156).